A 418-amino-acid chain; its full sequence is Acetylornithine aminotransferase (418 aa).

Residues G116 to A117 and F149 each bind pyridoxal 5'-phosphate. R152 contacts N(2)-acetyl-L-ornithine. Residue D240–Q243 coordinates pyridoxal 5'-phosphate. Position 269 is an N6-(pyridoxal phosphate)lysine (K269). S296 contributes to the N(2)-acetyl-L-ornithine binding site. T297 lines the pyridoxal 5'-phosphate pocket.

It belongs to the class-III pyridoxal-phosphate-dependent aminotransferase family. ArgD subfamily. Homodimer. The cofactor is pyridoxal 5'-phosphate.

The protein localises to the cytoplasm. It carries out the reaction N(2)-acetyl-L-ornithine + 2-oxoglutarate = N-acetyl-L-glutamate 5-semialdehyde + L-glutamate. It participates in amino-acid biosynthesis; L-arginine biosynthesis; N(2)-acetyl-L-ornithine from L-glutamate: step 4/4. This is Acetylornithine aminotransferase from Prochlorococcus marinus (strain MIT 9313).